A 447-amino-acid chain; its full sequence is GTPase Der (447 aa).

EngA-type G domains lie at 3-167 (PVIA…VQER) and 181-354 (VKIA…AAAM). Residues 9 to 16 (GRPNVGKS), 56 to 60 (DTGGF), 119 to 122 (NKAE), 187 to 194 (GRPNVGKS), 234 to 238 (DTAGL), and 299 to 302 (NKWD) each bind GTP. One can recognise a KH-like domain in the interval 355–439 (IKLPTPQITR…PLRIEFRTNK (85 aa)).

Belongs to the TRAFAC class TrmE-Era-EngA-EngB-Septin-like GTPase superfamily. EngA (Der) GTPase family. In terms of assembly, associates with the 50S ribosomal subunit.

In terms of biological role, GTPase that plays an essential role in the late steps of ribosome biogenesis. The protein is GTPase Der of Cupriavidus metallidurans (strain ATCC 43123 / DSM 2839 / NBRC 102507 / CH34) (Ralstonia metallidurans).